We begin with the raw amino-acid sequence, 374 residues long: Queuine tRNA-ribosyltransferase (374 aa).

D89 acts as the Proton acceptor in catalysis. Residues 89 to 93, D143, Q187, and G214 each bind substrate; that span reads DSGGF. The interval 245–251 is RNA binding; sequence GVGKPED. The active-site Nucleophile is the D264. Residues 269 to 273 form an RNA binding; important for wobble base 34 recognition region; the sequence is TRNAR. 4 residues coordinate Zn(2+): C302, C304, C307, and H333.

This sequence belongs to the queuine tRNA-ribosyltransferase family. In terms of assembly, homodimer. Within each dimer, one monomer is responsible for RNA recognition and catalysis, while the other monomer binds to the replacement base PreQ1. Zn(2+) is required as a cofactor.

The catalysed reaction is 7-aminomethyl-7-carbaguanine + guanosine(34) in tRNA = 7-aminomethyl-7-carbaguanosine(34) in tRNA + guanine. The protein operates within tRNA modification; tRNA-queuosine biosynthesis. Catalyzes the base-exchange of a guanine (G) residue with the queuine precursor 7-aminomethyl-7-deazaguanine (PreQ1) at position 34 (anticodon wobble position) in tRNAs with GU(N) anticodons (tRNA-Asp, -Asn, -His and -Tyr). Catalysis occurs through a double-displacement mechanism. The nucleophile active site attacks the C1' of nucleotide 34 to detach the guanine base from the RNA, forming a covalent enzyme-RNA intermediate. The proton acceptor active site deprotonates the incoming PreQ1, allowing a nucleophilic attack on the C1' of the ribose to form the product. After dissociation, two additional enzymatic reactions on the tRNA convert PreQ1 to queuine (Q), resulting in the hypermodified nucleoside queuosine (7-(((4,5-cis-dihydroxy-2-cyclopenten-1-yl)amino)methyl)-7-deazaguanosine). The chain is Queuine tRNA-ribosyltransferase from Yersinia pseudotuberculosis serotype O:1b (strain IP 31758).